A 343-amino-acid chain; its full sequence is 4-hydroxy-2-oxovalerate aldolase (343 aa).

Residues 4–254 (PRLTDTTLRD…NPGLDVFSLM (251 aa)) enclose the Pyruvate carboxyltransferase domain. Substrate is bound at residue 12 to 13 (RD). Aspartate 13 lines the Mn(2+) pocket. Histidine 16 serves as the catalytic Proton acceptor. Residues serine 166 and histidine 193 each coordinate substrate. Mn(2+)-binding residues include histidine 193 and histidine 195. Tyrosine 284 provides a ligand contact to substrate.

Belongs to the 4-hydroxy-2-oxovalerate aldolase family.

It carries out the reaction (S)-4-hydroxy-2-oxopentanoate = acetaldehyde + pyruvate. The polypeptide is 4-hydroxy-2-oxovalerate aldolase (Chloroflexus aurantiacus (strain ATCC 29364 / DSM 637 / Y-400-fl)).